A 156-amino-acid chain; its full sequence is Ribosomal RNA large subunit methyltransferase H (156 aa).

S-adenosyl-L-methionine is bound by residues L73, G104, and 123 to 128 (VSSLTL).

The protein belongs to the RNA methyltransferase RlmH family. In terms of assembly, homodimer.

It is found in the cytoplasm. It carries out the reaction pseudouridine(1915) in 23S rRNA + S-adenosyl-L-methionine = N(3)-methylpseudouridine(1915) in 23S rRNA + S-adenosyl-L-homocysteine + H(+). Specifically methylates the pseudouridine at position 1915 (m3Psi1915) in 23S rRNA. This chain is Ribosomal RNA large subunit methyltransferase H, found in Burkholderia thailandensis (strain ATCC 700388 / DSM 13276 / CCUG 48851 / CIP 106301 / E264).